Here is a 277-residue protein sequence, read N- to C-terminus: MHLSRYIAVLLSASSFVSALPLQNDVISDDGSKPIDAIMATAMEHKVVNPENLDATPATPENPEDLDKRFYYTGYKRNAETPEDLDKRFYYTGYKRNAETPEDLDKRFYYTGYKRNAETPEDLDKRFYYTGYKRNAETPEDLDKRFYYTGYKRNAETPEDLDKRFYYTGYKRNAETPDDLDKRFYYTGYKRNAETPDDLDKRFYYTGYKRNAETPEDLDKRFYYTGYKRNAETPEDLDKRFYYTGYKRNAETPEDLDKRFYYTGYKRNAETPEDLDK.

A signal peptide spans 1-19 (MHLSRYIAVLLSASSFVSA). Propeptides lie at residues 20 to 69 (LPLQ…LDKR), 76 to 88 (KRNAETPEDLDKR), 95 to 107 (KRNAETPEDLDKR), 114 to 126 (KRNAETPEDLDKR), 133 to 145 (KRNAETPEDLDKR), 152 to 164 (KRNAETPEDLDKR), 171 to 183 (KRNAETPDDLDKR), 190 to 202 (KRNAETPDDLDKR), 209 to 221 (KRNAETPEDLDKR), 228 to 240 (KRNAETPEDLDKR), 247 to 259 (KRNAETPEDLDKR), and 266 to 277 (KRNAETPEDLDK).

Post-translationally, aprA is processed by kexin proteases to produce 11 identical copies of the hexapeptide Phe-Tyr-Tyr-Thr-Gly-Tyr, that is further modified aprY and aprR to yield asperipin-2a. The bicyclic structure of asperipin-2a is likely synthesized by the single ustYa family oxidase aprY. The reductase aprR may be required for the final reduction to yield asperipin-2a.

The protein operates within secondary metabolite biosynthesis. In terms of biological role, ribosomally synthesized cyclic peptide asperipin-2a precursor; part of the gene cluster that mediates the biosynthesis of the asperipin-2a, a bicyclic peptide that possesses two macrocyclic ether rings consisting of 14- and 17-membered paracyclophans. The aprA translated product contains a 11-fold repeated peptide embedding the hexapeptide Phe-Tyr-Tyr-Thr-Gly-Tyr, that is converted into asperipin-2a. After being excised from the precursor peptide by kexin proteases, the core peptides are cyclized and modified post-translationally by enzymes encoded within the corresponding gene cluster. This Aspergillus flavus (strain ATCC 200026 / FGSC A1120 / IAM 13836 / NRRL 3357 / JCM 12722 / SRRC 167) protein is Ribosomally synthesized cyclic peptide asperipin-2a precursor aprA.